The sequence spans 426 residues: Pannexin-1 (426 aa).

Topologically, residues 1 to 40 (MAIAHLATEYVFSDFLLKEPTEPKFKGLRLELAVDKMVTC) are cytoplasmic. C40 is subject to S-nitrosocysteine. Residues 41–61 (IAVGLPLLLISLAFAQEISIG) traverse the membrane as a helical segment. At 62-106 (TQISCFSPSSFSWRQAAFVDSYCWAAVQQKSSLQSESGNLPLWLH) the chain is on the extracellular side. 2 disulfides stabilise this stretch: C66–C264 and C84–C245. Residues 107 to 127 (KFFPYILLLFAILLYLPALFW) traverse the membrane as a helical segment. At 128 to 216 (RFSAAPHLCS…HLIMKYISCR (89 aa)) the chain is on the cytoplasmic side. Position 198 is a phosphotyrosine (Y198). The helical transmembrane segment at 217–237 (LVTFVVILLACIYLSYYFSLS) threads the bilayer. Over 238–277 (SLSDEFLCSIKSGVLKNDSTIPDRFQCKLIAVGIFQLLSL) the chain is Extracellular. Residue N254 is glycosylated (N-linked (GlcNAc...) asparagine). A helical membrane pass occupies residues 278 to 298 (INLIVYALLIPVVVYTFFIPF). Residues 299-426 (RQKTDILKVY…SRQRLLNPSC (128 aa)) lie on the Cytoplasmic side of the membrane. At C346 the chain carries S-nitrosocysteine.

This sequence belongs to the pannexin family. As to quaternary structure, homoheptameric. In terms of processing, S-nitrosylation inhibits channel currents and ATP release. N-glycosylation may play a role in cell surface targeting. Exists in three glycosylation states: non-glycosylated (GLY0), high-mannose glycosylated (GLY1), and fully mature glycosylated (GLY2). Post-translationally, phosphorylated at Tyr-198 by SRC. Phosphorylation activates ATP release. Constitutively phosphorylated in vascular smooth muscle cells. In terms of processing, cleaved by CASP3 and CASP7 during apoptosis. Cleavage opens the channel for the release of metabolites and induces plasma membrane permeability during apoptosis. As to expression, widely expressed, including in cartilage, skin, spleen and brain.

It is found in the cell membrane. Its subcellular location is the endoplasmic reticulum membrane. It carries out the reaction chloride(in) = chloride(out). It catalyses the reaction iodide(out) = iodide(in). The catalysed reaction is Ca(2+)(in) = Ca(2+)(out). The enzyme catalyses ATP(in) = ATP(out). It carries out the reaction K(+)(in) = K(+)(out). It catalyses the reaction Na(+)(in) = Na(+)(out). The catalysed reaction is nitrate(in) = nitrate(out). The enzyme catalyses L-aspartate(out) = L-aspartate(in). It carries out the reaction L-glutamate(out) = L-glutamate(in). It catalyses the reaction D-gluconate(in) = D-gluconate(out). The catalysed reaction is spermidine(in) = spermidine(out). Its function is as follows. Ion channel involved in a variety of physiological functions such as blood pressure regulation, apoptotic cell clearance and oogenesis. Forms anion-selective channels with relatively low conductance and an order of permeabilities: nitrate&gt;iodide&gt;chlroride&gt;&gt;aspartate=glutamate=gluconate. Can release ATP upon activation through phosphorylation or cleavage at C-terminus. May play a role as a Ca(2+)-leak channel to regulate ER Ca(2+) homeostasis. In terms of biological role, during apoptosis and after cleavage by caspases of the C-terminal tail, acts as a plasma membrane channel which mediates the regulated release of find-me signals, such as nucleotides ATP and UTP, and selective plasme membrane permeability. The sequence is that of Pannexin-1 from Mus musculus (Mouse).